Reading from the N-terminus, the 569-residue chain is 3-oxosteroid 1-dehydrogenase (569 aa).

10-39 (DVVVVGSGAAGMVAALTAAHQGLSTVVVEK) contributes to the FAD binding site. A disordered region spans residues 127 to 148 (PGGKPTGRSVEPKPFDANKLGP).

The protein belongs to the FAD-dependent oxidoreductase 2 family. 3-oxosteroid dehydrogenase subfamily. Requires FAD as cofactor.

The catalysed reaction is a 3-oxosteroid + A = a 3-oxo-Delta(1)-steroid + AH2. It catalyses the reaction a 3-oxo-Delta(4)-steroid + A = a 3-oxo-Delta(1,4)-steroid + AH2. Its function is as follows. Catalyzes the elimination of the C-1 and C-2 hydrogen atoms of the A-ring from the polycyclic ring structure of 3-ketosteroids. Is also involved in the formation of 1,4-androstadiene-3,17-dione (ADD) from 4-androstene-3,17-dione (AD) to. In Mycolicibacterium smegmatis (strain ATCC 700084 / mc(2)155) (Mycobacterium smegmatis), this protein is 3-oxosteroid 1-dehydrogenase (ksdD).